The following is a 153-amino-acid chain: 3-hydroxyacyl-[acyl-carrier-protein] dehydratase FabZ (153 aa).

Histidine 54 is an active-site residue.

Belongs to the thioester dehydratase family. FabZ subfamily.

The protein resides in the cytoplasm. It catalyses the reaction a (3R)-hydroxyacyl-[ACP] = a (2E)-enoyl-[ACP] + H2O. Functionally, involved in unsaturated fatty acids biosynthesis. Catalyzes the dehydration of short chain beta-hydroxyacyl-ACPs and long chain saturated and unsaturated beta-hydroxyacyl-ACPs. The chain is 3-hydroxyacyl-[acyl-carrier-protein] dehydratase FabZ from Chlamydia pneumoniae (Chlamydophila pneumoniae).